The following is a 319-amino-acid chain: ATP-dependent 6-phosphofructokinase (319 aa).

Gly11 serves as a coordination point for ATP. An ADP-binding site is contributed by 21–25 (RAVVR). ATP is bound by residues 72 to 73 (RC) and 102 to 105 (GDGS). A Mg(2+)-binding site is contributed by Asp103. 125–127 (TID) contacts substrate. Residue Asp127 is the Proton acceptor of the active site. ADP is bound at residue Arg154. 169–171 (MGR) contacts substrate. ADP is bound by residues 185–187 (GAE), Arg211, and 213–215 (KKH). Substrate-binding positions include Glu222, Arg243, and 249–252 (HIQR).

This sequence belongs to the phosphofructokinase type A (PFKA) family. ATP-dependent PFK group I subfamily. Prokaryotic clade 'B1' sub-subfamily. Homotetramer. Requires Mg(2+) as cofactor.

It localises to the cytoplasm. It catalyses the reaction beta-D-fructose 6-phosphate + ATP = beta-D-fructose 1,6-bisphosphate + ADP + H(+). It functions in the pathway carbohydrate degradation; glycolysis; D-glyceraldehyde 3-phosphate and glycerone phosphate from D-glucose: step 3/4. With respect to regulation, allosterically activated by ADP and other diphosphonucleosides, and allosterically inhibited by phosphoenolpyruvate. In terms of biological role, catalyzes the phosphorylation of D-fructose 6-phosphate to fructose 1,6-bisphosphate by ATP, the first committing step of glycolysis. In Lysinibacillus sphaericus (Bacillus sphaericus), this protein is ATP-dependent 6-phosphofructokinase.